We begin with the raw amino-acid sequence, 504 residues long: Outer capsid protein VP5 (504 aa).

Residues 1–42 are involved in membrane permeabilization; the sequence is MGKFTSFLKRAGSATKNALTSDAAKRMYKMAGKTLQKVVESE.

It belongs to the orbivirus VP5 family.

The protein resides in the virion. In terms of biological role, VP5 protein is one of the two proteins (with VP2) which constitute the virus particle outer capsid. Acts as a membrane permeabilization protein that mediates release of viral particles from endosomal compartments into the cytoplasm. Permeabilization activity is probably negatively regulated by VP2 and is triggered by endosomal degradation of VP2 and exposure to low pH. This is Outer capsid protein VP5 (Segment-6) from African horse sickness virus 6 (AHSV-6).